Reading from the N-terminus, the 115-residue chain is WLMIVEQKCRVIVMLAKCFEAGKKKCQKYWPDSKETKAFGRVTVFNAEEVKYCGFIRRRFRIESVDKVLSMEVFQYQYINWPDHSVPNTTSNLVRMHKYVIQCLEETGSDAPMVV.

Residues 1 to 115 (WLMIVEQKCR…ETGSDAPMVV (115 aa)) form the Tyrosine-protein phosphatase domain. Asp83 is a binding site for substrate.

This sequence belongs to the protein-tyrosine phosphatase family.

The enzyme catalyses O-phospho-L-tyrosyl-[protein] + H2O = L-tyrosyl-[protein] + phosphate. The protein is Tyrosine-protein phosphatase 18 (STY-18) of Styela plicata (Wrinkled sea squirt).